The primary structure comprises 144 residues: MRLNTLSPAEGSKKAGKRLGRGIGSGLGKTGGRGHKGQKSRSGGGVRRGFEGGQMPLYRRLPKFGFTSRKAAITAEVRLSDLAKVEGGVVDLNTLKAANIIGIQIEFAKVILAGEVTTPVTVRGLRVTKGARAAIEAAGGKIEE.

The segment at 1-54 (MRLNTLSPAEGSKKAGKRLGRGIGSGLGKTGGRGHKGQKSRSGGGVRRGFEGGQ) is disordered. Residues 21 to 31 (RGIGSGLGKTG) are compositionally biased toward gly residues.

Belongs to the universal ribosomal protein uL15 family. In terms of assembly, part of the 50S ribosomal subunit.

Its function is as follows. Binds to the 23S rRNA. In Salmonella enteritidis PT4 (strain P125109), this protein is Large ribosomal subunit protein uL15.